We begin with the raw amino-acid sequence, 687 residues long: Translation initiation factor IF-2 (687 aa).

The tr-type G domain occupies 186–355 (KRPPIVTVMG…LLTAEMLELK (170 aa)). Residues 195-202 (GHVDHGKT) are G1. GTP is bound at residue 195–202 (GHVDHGKT). Positions 220–224 (GITQH) are G2. Positions 241–244 (DTPG) are G3. Residues 241 to 245 (DTPGH) and 295 to 298 (NKID) each bind GTP. Residues 295 to 298 (NKID) form a G4 region. Residues 331–333 (SAK) are G5.

Belongs to the TRAFAC class translation factor GTPase superfamily. Classic translation factor GTPase family. IF-2 subfamily.

The protein resides in the cytoplasm. Its function is as follows. One of the essential components for the initiation of protein synthesis. Protects formylmethionyl-tRNA from spontaneous hydrolysis and promotes its binding to the 30S ribosomal subunits. Also involved in the hydrolysis of GTP during the formation of the 70S ribosomal complex. This is Translation initiation factor IF-2 from Clostridium botulinum (strain Eklund 17B / Type B).